Consider the following 311-residue polypeptide: Probable manganese-dependent inorganic pyrophosphatase (311 aa).

The Mn(2+) site is built by histidine 9, aspartate 13, aspartate 15, aspartate 77, histidine 99, and aspartate 151.

Belongs to the PPase class C family. Mn(2+) is required as a cofactor.

It is found in the cytoplasm. It catalyses the reaction diphosphate + H2O = 2 phosphate + H(+). The protein is Probable manganese-dependent inorganic pyrophosphatase of Streptococcus pyogenes serotype M49 (strain NZ131).